A 529-amino-acid chain; its full sequence is Delayed-rectifier potassium channel regulatory subunit KCNS1 (529 aa).

Topologically, residues 1-217 (MLMLLVRGTH…LTMENPGYSL (217 aa)) are cytoplasmic. A helical transmembrane segment spans residues 218 to 239 (PSKLFSCVSISVVLASIAAMCI). Over 240-270 (HSLPEYQAREAAAAVAAVAAGRSPEGVRDDP) the chain is Extracellular. The chain crosses the membrane as a helical span at residues 271–293 (VLRRLEYFCIAWFSFEVSSRLLL). The Cytoplasmic segment spans residues 294-304 (APSTRNFFCHP). A helical transmembrane segment spans residues 305-322 (LNLIDIVSVLPFYLTLLA). At 323–340 (GVALGDQGGTGGKELGHL) the chain is on the extracellular side. The helical; Voltage-sensor transmembrane segment at 341–361 (GKVVQVFRLMRIFRVLKLARH) threads the bilayer. Residues 362-376 (STGLRSLGATLKHSY) are Cytoplasmic-facing. A helical membrane pass occupies residues 377 to 398 (REVGILLLYLAVGVSVFSGVAY). The Extracellular segment spans residues 399–411 (TAEKEEDVGFNTI). Residues 412–423 (PACWWWGTVSMT) constitute an intramembrane region (helical). The Selectivity filter signature appears at 424–429 (TVGYGD). Residues 424–431 (TVGYGDVV) lie within the membrane without spanning it. At 432–438 (PVTVAGK) the chain is on the extracellular side. The chain crosses the membrane as a helical span at residues 439-467 (LAASGCILGGILVVALPITIIFNKFSHFY). Over 468–529 (RRQKALEAAV…PSEPPHPQMY (62 aa)) the chain is Cytoplasmic. Residues 494 to 529 (GVSEASLETSRETSQEGRSADLETQAPSEPPHPQMY) are disordered. Positions 502–514 (TSRETSQEGRSAD) are enriched in basic and acidic residues.

Belongs to the potassium channel family. S (TC 1.A.1.2) subfamily. Kv9.1/KCNS1 sub-subfamily. Heterotetramer with KCNB1. Heterotetramer with KCNB2. Does not form homomultimers.

The protein localises to the cell membrane. Potassium channel regulatory subunit that modulate the delayed rectifier voltage-gated potassium channel activity of KCNB1 and KCNB2 by altering their kinetics, expression levels, and shifting the half-inactivation potential to more polarized values. While it does not form functional channels on its own, it can form functional heterotetrameric channels with KCNB1 and KCNB2. Each regulatory subunit has unique regulatory properties that can lead to extensive inhibition, significant changes in kinetics, and/or substantial shifts in the voltage dependencies of the inactivation process. This is Delayed-rectifier potassium channel regulatory subunit KCNS1 from Chlorocebus aethiops (Green monkey).